A 103-amino-acid polypeptide reads, in one-letter code: Small ribosomal subunit protein bS20 (103 aa).

Basic residues predominate over residues 1 to 20 (MATAKPKKKNPRLASGRKRV). Residues 1-31 (MATAKPKKKNPRLASGRKRVRQDTKLNAANT) are disordered.

Belongs to the bacterial ribosomal protein bS20 family.

Functionally, binds directly to 16S ribosomal RNA. In Polaromonas sp. (strain JS666 / ATCC BAA-500), this protein is Small ribosomal subunit protein bS20.